The sequence spans 161 residues: Large ribosomal subunit protein uL10 (161 aa).

This sequence belongs to the universal ribosomal protein uL10 family. Part of the ribosomal stalk of the 50S ribosomal subunit. The N-terminus interacts with L11 and the large rRNA to form the base of the stalk. The C-terminus forms an elongated spine to which L12 dimers bind in a sequential fashion forming a multimeric L10(L12)X complex.

Its function is as follows. Forms part of the ribosomal stalk, playing a central role in the interaction of the ribosome with GTP-bound translation factors. This Mycoplasma pneumoniae (strain ATCC 29342 / M129 / Subtype 1) (Mycoplasmoides pneumoniae) protein is Large ribosomal subunit protein uL10 (rplJ).